Consider the following 96-residue polypeptide: Large ribosomal subunit protein eL14 (96 aa).

The protein belongs to the eukaryotic ribosomal protein eL14 family.

This Saccharolobus islandicus (strain Y.N.15.51 / Yellowstone #2) (Sulfolobus islandicus) protein is Large ribosomal subunit protein eL14.